Consider the following 123-residue polypeptide: Small ribosomal subunit protein uS12 (123 aa).

Asp-89 bears the 3-methylthioaspartic acid mark.

This sequence belongs to the universal ribosomal protein uS12 family. In terms of assembly, part of the 30S ribosomal subunit. Contacts proteins S8 and S17. May interact with IF1 in the 30S initiation complex.

With S4 and S5 plays an important role in translational accuracy. Functionally, interacts with and stabilizes bases of the 16S rRNA that are involved in tRNA selection in the A site and with the mRNA backbone. Located at the interface of the 30S and 50S subunits, it traverses the body of the 30S subunit contacting proteins on the other side and probably holding the rRNA structure together. The combined cluster of proteins S8, S12 and S17 appears to hold together the shoulder and platform of the 30S subunit. The sequence is that of Small ribosomal subunit protein uS12 from Geobacter metallireducens (strain ATCC 53774 / DSM 7210 / GS-15).